The following is a 580-amino-acid chain: Protein O-linked-mannose beta-1,4-N-acetylglucosaminyltransferase 2 (580 aa).

Residues 1-4 are Cytoplasmic-facing; sequence MHLS. Residues 5-25 traverse the membrane as a helical; Signal-anchor for type II membrane protein segment; sequence AVFNALLVSVLAAVLWKHVRL. The Lumenal segment spans residues 26–580; the sequence is REHAATLEEE…PFADVLVCNT (555 aa). 2 N-linked (GlcNAc...) asparagine glycosylation sites follow: N99 and N276. Residues 488-580 enclose the Fibronectin type-III domain; sequence ARCQASVHGA…PFADVLVCNT (93 aa).

Belongs to the glycosyltransferase 61 family.

The protein resides in the endoplasmic reticulum membrane. The catalysed reaction is 3-O-(alpha-D-mannosyl)-L-threonyl-[protein] + UDP-N-acetyl-alpha-D-glucosamine = 3-O-(N-acetyl-beta-D-glucosaminyl-(1-&gt;4)-alpha-D-mannosyl)-L-threonyl-[protein] + UDP + H(+). Its pathway is protein modification; protein glycosylation. O-linked mannose beta-1,4-N-acetylglucosaminyltransferase that transfers UDP-N-acetyl-D-glucosamine to the 4-position of the mannose to generate N-acetyl-D-glucosamine-beta-1,4-O-D-mannosylprotein. Involved in the biosynthesis of the phosphorylated O-mannosyl trisaccharide (N-acetylgalactosamine-beta-3-N-acetylglucosamine-beta-4-(phosphate-6-)mannose), a carbohydrate structure present in alpha-dystroglycan (DAG1), which is required for binding laminin G-like domain-containing extracellular proteins with high affinity. This is Protein O-linked-mannose beta-1,4-N-acetylglucosaminyltransferase 2 (POMGNT2) from Pan troglodytes (Chimpanzee).